A 181-amino-acid polypeptide reads, in one-letter code: ADP-ribosylation factor 2-A (181 aa).

Gly-2 carries N-myristoyl glycine lipidation. GTP contacts are provided by residues 24–31 (GLDAAGKT), 67–71 (DVGGQ), and 126–129 (NKQD).

It belongs to the small GTPase superfamily. Arf family.

It localises to the golgi apparatus. Its activity is regulated as follows. Activated by AGD10. In terms of biological role, GTP-binding protein involved in protein trafficking; may modulate vesicle budding and uncoating within the Golgi apparatus. This Arabidopsis thaliana (Mouse-ear cress) protein is ADP-ribosylation factor 2-A (ARF2-A).